A 3414-amino-acid chain; its full sequence is Hemocyanin 1 (3414 aa).

The N-terminal stretch at 1 to 16 (MLSVRLLIVVLALANA) is a signal peptide. Position 17 (E17) interacts with a divalent metal cation. The interval 17–437 (ENLVRKSVEH…PPVKHHQSAN (421 aa)) is functional unit a (wall). Position 58 (H58) interacts with Cu cation. An intrachain disulfide couples C64 to C73. Residues 74-76 (CIH) constitute a cross-link (2'-(S-cysteinyl)-histidine (Cys-His)). H76, H85, H195, H199, and H226 together coordinate Cu cation. Cysteines 185 and 252 form a disulfide. Positions 287–290 (CELH) form a cross-link, 2'-(S-cysteinyl)-histidine (Cys-His). Cysteines 339 and 351 form a disulfide. N403 carries an N-linked (GlcNAc...) asparagine glycan. The functional unit b (wall) stretch occupies residues 438–851 (LLVRKNINDL…RVKFDKVPRS (414 aa)). H478 lines the Cu cation pocket. C484 and C495 are joined by a disulfide. Positions 496 to 498 (CVH) form a cross-link, 2'-(S-cysteinyl)-histidine (Cys-His). Cu cation contacts are provided by H498 and H507. N-linked (GlcNAc...) asparagine glycosylation occurs at N545. Residues C608 and C674 are joined by a disulfide bond. The Cu cation site is built by H618, H622, and H649. The WD 1 repeat unit spans residues 628–669 (SEHFSMSSLHYTAFDPLFYFHHSNVDRLWAVWQALQMRRHKP). Residue E737 participates in a divalent metal cation binding. A functional unit c (wall) region spans residues 852 to 1271 (RLIRKNVDRL…EVYQAEVTSA (420 aa)). Residue H892 participates in Cu cation binding. A disulfide bridge connects residues C898 and C909. Positions 910–912 (CVH) form a cross-link, 2'-(S-cysteinyl)-histidine (Cys-His). H912, H921, H1031, H1035, and H1062 together coordinate Cu cation. Cystine bridges form between C1021-C1088 and C1178-C1184. The stretch at 1041–1082 (AQPYGMASLRYTAFDPLFYLHHSNTDRIWAIWQALQKYRGKP) is one WD 2 repeat. Residues 1272–1680 (NRIRKNIENL…AHTDDGHTEP (409 aa)) are functional unit d (wall). H1309 is a Cu cation binding site. Residues C1315 and C1324 are joined by a disulfide bond. The segment at residues 1325–1327 (CVH) is a cross-link (2'-(S-cysteinyl)-histidine (Cys-His)). Cu cation-binding residues include H1327, H1336, H1440, H1444, and H1471. 2 disulfides stabilise this stretch: C1430/C1497 and C1585/C1595. The WD 3 repeat unit spans residues 1450–1491 (KGKYSMSNLDYAAFDPVFFLHHATTDRIWAIWQDLQRFRKRP). The N-linked (GlcNAc...) asparagine glycan is linked to N1648. The tract at residues 1681-2097 (VMIRKDITQL…HDISSHHLSL (417 aa)) is functional unit e (wall). Residue H1721 coordinates Cu cation. A disulfide bridge connects residues C1727 and C1738. Positions 1739 to 1741 (CVH) form a cross-link, 2'-(S-cysteinyl)-histidine (Cys-His). Residues H1741, H1750, H1863, H1867, and H1894 each coordinate Cu cation. 2 disulfide bridges follow: C1853–C1920 and C2009–C2015. A WD 4 repeat occupies 1873–1914 (KEPYGIGHLHYASYDPLFYIHHSQTDRIWAIWQSLQRFRGLS). A functional unit f (wall) region spans residues 2098–2517 (NKVRHDLSTL…EDHHSSSMAG (420 aa)). Cu cation is bound at residue H2138. Residues C2144 and C2154 are joined by a disulfide bond. N-linked (GlcNAc...) asparagine glycosylation is present at N2145. Residues 2155–2157 (CIH) constitute a cross-link (2'-(S-cysteinyl)-histidine (Cys-His)). Cu cation contacts are provided by H2157, H2166, H2276, H2280, and H2307. One copy of the WD 5 repeat lies at 2163–2199 (PHWHRLYTLQFEQALRRHGSSVAVPYWDWTKPIHNIP). Disulfide bonds link C2266–C2333 and C2420–C2426. Position 2424 (E2424) interacts with a divalent metal cation. A functional unit g (internal arc) region spans residues 2518-2921 (HGVRKEINTL…EKHHEDHHED (404 aa)). Position 2558 (H2558) interacts with Cu cation. C2564 and C2574 form a disulfide bridge. Residue N2571 is glycosylated (N-linked (GlcNAc...) asparagine). A cross-link (2'-(S-cysteinyl)-histidine (Cys-His)) is located at residues 2575-2577 (CTH). Cu cation-binding residues include H2577, H2586, H2686, H2690, and H2717. Cystine bridges form between C2676–C2743 and C2830–C2836. One copy of the WD 6 repeat lies at 2696-2737 (LTPYGMSTLEYTTYDPLFWLHHANTDRIWAIWQALQEYRGLP). The segment at 2922-3414 (ILVRKNIHSL…LRIHVHVDDE (493 aa)) is functional unit h (internal slab). Residue H2962 participates in Cu cation binding. C2968 and C2978 are disulfide-bonded. Positions 2979–2981 (CVH) form a cross-link, 2'-(S-cysteinyl)-histidine (Cys-His). The Cu cation site is built by H2981, H2990, H3091, H3095, and H3122. Cysteines 3081 and 3148 form a disulfide. A WD 7 repeat occupies 3101–3142 (AEKYSMSTLEYSAFDPYFMIHHASLDKIWIIWQELQKRRVKP). N3278 carries N-linked (GlcNAc...) asparagine glycosylation. Cysteines 3367 and 3400 form a disulfide.

The protein belongs to the tyrosinase family. Hemocyanin subfamily. Homo-didecamer, with two decamers assembled face-to-face at their open ends. This didecamer form a stable 25 nM cylinder wall. In terms of processing, probably N-glycosylated. Asn-1280 and Asn-2484 are buried deeply in the protein which make them inaccessible for sugar attachment. Asn-3278 N-glycan is likely to represent a diantennate carbohydrate tree. The didecamer is almost evenly tagged by a total of 120 sugar trees. Hemolymph.

It is found in the secreted. The protein localises to the extracellular space. In terms of biological role, hemocyanins are copper-containing oxygen carriers occurring freely dissolved in the hemolymph of many mollusks and arthropods. This is Hemocyanin 1 from Megathura crenulata (Giant keyhole limpet).